The chain runs to 232 residues: Octanoyltransferase (232 aa).

Residues 40–226 (GSAPERVWLL…TWQDLFGSVP (187 aa)) enclose the BPL/LPL catalytic domain. Substrate contacts are provided by residues 79-86 (RGGQWTYH), 157-159 (ALG), and 170-172 (GVA). Catalysis depends on Cys188, which acts as the Acyl-thioester intermediate.

The protein belongs to the LipB family.

The protein localises to the cytoplasm. The enzyme catalyses octanoyl-[ACP] + L-lysyl-[protein] = N(6)-octanoyl-L-lysyl-[protein] + holo-[ACP] + H(+). It participates in protein modification; protein lipoylation via endogenous pathway; protein N(6)-(lipoyl)lysine from octanoyl-[acyl-carrier-protein]: step 1/2. Its function is as follows. Catalyzes the transfer of endogenously produced octanoic acid from octanoyl-acyl-carrier-protein onto the lipoyl domains of lipoate-dependent enzymes. Lipoyl-ACP can also act as a substrate although octanoyl-ACP is likely to be the physiological substrate. The sequence is that of Octanoyltransferase from Gluconacetobacter diazotrophicus (strain ATCC 49037 / DSM 5601 / CCUG 37298 / CIP 103539 / LMG 7603 / PAl5).